A 1464-amino-acid chain; its full sequence is Gag-Pol polyprotein (1464 aa).

Residue Gly-2 is the site of N-myristoyl glycine; by host attachment. Residues 7 to 31 are interaction with Gp41; it reads VLRGKKADELERIRLRPGGKKKYRL. Positions 16–22 match the Nuclear export signal motif; sequence LERIRLR. The Nuclear localization signal signature appears at 26–32; it reads KKKYRLK. Residues 111–136 form a disordered region; that stretch reads ETGTAEKMPSTSRPTAPSSEKGGNYP. Positions 119–128 are enriched in polar residues; it reads PSTSRPTAPS. The residue at position 135 (Tyr-135) is a Phosphotyrosine; by host. Residues 191-228 are interaction with human PPIA/CYPA and NUP153; that stretch reads NCVGDHQAAMQIIREIINEEAAEWDVQHPIPGPLPAGQ. The dimerization/Multimerization of capsid protein p24 stretch occupies residues 279–365; that stretch reads YNPTNILDIK…GGPGQKARLM (87 aa). 2 CCHC-type zinc fingers span residues 389–406 and 410–427; these read FKCWNCGKEGHSARQCRA and QGCWKCGKPGHIMTNCPD. Residues 432 to 500 are disordered; the sequence is FLRTGPLGKE…RGLTAPRAGG (69 aa). Residues 456–469 are compositionally biased toward low complexity; the sequence is TNSTPSGSSSGSTG. Residues 473-485 show a composition bias toward basic and acidic residues; that stretch reads AAREKTERAERET. Residues 514–518 are dimerization of protease; the sequence is PQFSL. Residues 533-602 form the Peptidase A2 domain; sequence VEVLLDTGAD…TPINIFGRNI (70 aa). The active-site For protease activity; shared with dimeric partner is Asp-538. Dimerization of protease regions lie at residues 562-568 and 601-613; these read GIGGFIN and NILTALGMSLNLP. The Reverse transcriptase domain occupies 656 to 846; the sequence is EGQLEEAPPT…PPYHWMGYEL (191 aa). Mg(2+) is bound by residues Asp-722, Asp-797, and Asp-798. The tract at residues 839-847 is RT 'primer grip'; that stretch reads YHWMGYELW. Residues 1009-1025 carry the Tryptophan repeat motif motif; sequence WEQWWDNYWQVTWIPDW. An RNase H type-1 domain is found at 1045–1168; the sequence is IPGAETFYTD…VDHLVSQGIR (124 aa). Residues Asp-1054, Glu-1089, Asp-1109, and Asp-1160 each coordinate Mg(2+). An Integrase-type zinc finger spans residues 1174–1215; it reads EKIEPAQEEHEKYHSNVKELSHKFGIPNLVARQIVNSCAQCQ. Zn(2+)-binding residues include His-1183, His-1187, Cys-1211, and Cys-1214. Positions 1224–1375 constitute an Integrase catalytic domain; the sequence is QVNAELGTWQ…TPSERLINMI (152 aa). Residues Asp-1235, Asp-1287, and Glu-1323 each coordinate Mg(2+). The segment at residues 1394-1441 is a DNA-binding region (integrase-type); sequence FRVYFREGRDQLWKGPGELLWKGEGAVLVKVGTDIKIIPRRKAKIIRD.

Homotrimer; further assembles as hexamers of trimers. Interacts with gp41 (via C-terminus). Interacts with host CALM1; this interaction induces a conformational change in the Matrix protein, triggering exposure of the myristate group. Interacts with host AP3D1; this interaction allows the polyprotein trafficking to multivesicular bodies during virus assembly. Part of the pre-integration complex (PIC) which is composed of viral genome, matrix protein, Vpr and integrase. As to quaternary structure, homodimer; the homodimer further multimerizes as homohexamers or homopentamers. Interacts with human PPIA/CYPA. Interacts with human NUP153. Interacts with host PDZD8; this interaction stabilizes the capsid. Interacts with monkey TRIM5; this interaction destabilizes the capsid. In terms of assembly, homodimer, whose active site consists of two apposed aspartic acid residues. Heterodimer of p66 RT and p51 RT (RT p66/p51). Heterodimerization of RT is essential for DNA polymerase activity. The overall folding of the subdomains is similar in p66 RT and p51 RT but the spatial arrangements of the subdomains are dramatically different. As to quaternary structure, homotetramer; may further associate as a homohexadecamer. Part of the pre-integration complex (PIC) which is composed of viral genome, matrix protein, Vpr and integrase. Interacts with human SMARCB1/INI1 and human PSIP1/LEDGF isoform 1. Interacts with human KPNA3; this interaction might play a role in nuclear import of the pre-integration complex. Interacts with human NUP153; this interaction might play a role in nuclear import of the pre-integration complex. Mg(2+) is required as a cofactor. Specific enzymatic cleavages by the viral protease yield mature proteins. The protease is released by autocatalytic cleavage. The polyprotein is cleaved during and after budding, this process is termed maturation. Proteolytic cleavage of p66 RT removes the RNase H domain to yield the p51 RT subunit. Nucleocapsid protein p7 might be further cleaved after virus entry.

The protein resides in the host cell membrane. It localises to the host endosome. The protein localises to the host multivesicular body. It is found in the virion membrane. Its subcellular location is the host nucleus. The protein resides in the host cytoplasm. It localises to the virion. It catalyses the reaction Endopeptidase for which the P1 residue is preferably hydrophobic.. The enzyme catalyses Endohydrolysis of RNA in RNA/DNA hybrids. Three different cleavage modes: 1. sequence-specific internal cleavage of RNA. Human immunodeficiency virus type 1 and Moloney murine leukemia virus enzymes prefer to cleave the RNA strand one nucleotide away from the RNA-DNA junction. 2. RNA 5'-end directed cleavage 13-19 nucleotides from the RNA end. 3. DNA 3'-end directed cleavage 15-20 nucleotides away from the primer terminus.. It carries out the reaction 3'-end directed exonucleolytic cleavage of viral RNA-DNA hybrid.. The catalysed reaction is DNA(n) + a 2'-deoxyribonucleoside 5'-triphosphate = DNA(n+1) + diphosphate. With respect to regulation, protease: The viral protease is inhibited by many synthetic protease inhibitors (PIs), such as amprenavir, atazanavir, indinavir, loprinavir, nelfinavir, ritonavir and saquinavir. Use of protease inhibitors in tritherapy regimens permit more ambitious therapeutic strategies. Reverse transcriptase/ribonuclease H: RT can be inhibited either by nucleoside RT inhibitors (NRTIs) or by non nucleoside RT inhibitors (NNRTIs). NRTIs act as chain terminators, whereas NNRTIs inhibit DNA polymerization by binding a small hydrophobic pocket near the RT active site and inducing an allosteric change in this region. Classical NRTIs are abacavir, adefovir (PMEA), didanosine (ddI), lamivudine (3TC), stavudine (d4T), tenofovir (PMPA), zalcitabine (ddC), and zidovudine (AZT). Classical NNRTIs are atevirdine (BHAP U-87201E), delavirdine, efavirenz (DMP-266), emivirine (I-EBU), and nevirapine (BI-RG-587). The tritherapies used as a basic effective treatment of AIDS associate two NRTIs and one NNRTI. Functionally, mediates, with Gag polyprotein, the essential events in virion assembly, including binding the plasma membrane, making the protein-protein interactions necessary to create spherical particles, recruiting the viral Env proteins, and packaging the genomic RNA via direct interactions with the RNA packaging sequence (Psi). Gag-Pol polyprotein may regulate its own translation, by the binding genomic RNA in the 5'-UTR. At low concentration, the polyprotein would promote translation, whereas at high concentration, the polyprotein would encapsidate genomic RNA and then shut off translation. In terms of biological role, targets the polyprotein to the plasma membrane via a multipartite membrane-binding signal, that includes its myristoylated N-terminus. Matrix protein is part of the pre-integration complex. Implicated in the release from host cell mediated by Vpu. Binds to RNA. Forms the conical core that encapsulates the genomic RNA-nucleocapsid complex in the virion. Most core are conical, with only 7% tubular. The core is constituted by capsid protein hexamer subunits. The core is disassembled soon after virion entry. Host restriction factors such as TRIM5-alpha or TRIMCyp bind retroviral capsids and cause premature capsid disassembly, leading to blocks in reverse transcription. Capsid restriction by TRIM5 is one of the factors which restricts HIV-1 to the human species. Host PIN1 apparently facilitates the virion uncoating. On the other hand, interactions with PDZD8 or CYPA stabilize the capsid. Its function is as follows. Encapsulates and protects viral dimeric unspliced genomic RNA (gRNA). Binds these RNAs through its zinc fingers. Acts as a nucleic acid chaperone which is involved in rearangement of nucleic acid secondary structure during gRNA retrotranscription. Also facilitates template switch leading to recombination. As part of the polyprotein, participates in gRNA dimerization, packaging, tRNA incorporation and virion assembly. Functionally, aspartyl protease that mediates proteolytic cleavages of Gag and Gag-Pol polyproteins during or shortly after the release of the virion from the plasma membrane. Cleavages take place as an ordered, step-wise cascade to yield mature proteins. This process is called maturation. Displays maximal activity during the budding process just prior to particle release from the cell. Also cleaves Nef and Vif, probably concomitantly with viral structural proteins on maturation of virus particles. Hydrolyzes host EIF4GI and PABP1 in order to shut off the capped cellular mRNA translation. The resulting inhibition of cellular protein synthesis serves to ensure maximal viral gene expression and to evade host immune response. In terms of biological role, multifunctional enzyme that converts the viral RNA genome into dsDNA in the cytoplasm, shortly after virus entry into the cell. This enzyme displays a DNA polymerase activity that can copy either DNA or RNA templates, and a ribonuclease H (RNase H) activity that cleaves the RNA strand of RNA-DNA heteroduplexes in a partially processive 3' to 5' endonucleasic mode. Conversion of viral genomic RNA into dsDNA requires many steps. A tRNA(3)-Lys binds to the primer-binding site (PBS) situated at the 5'-end of the viral RNA. RT uses the 3' end of the tRNA primer to perform a short round of RNA-dependent minus-strand DNA synthesis. The reading proceeds through the U5 region and ends after the repeated (R) region which is present at both ends of viral RNA. The portion of the RNA-DNA heteroduplex is digested by the RNase H, resulting in a ssDNA product attached to the tRNA primer. This ssDNA/tRNA hybridizes with the identical R region situated at the 3' end of viral RNA. This template exchange, known as minus-strand DNA strong stop transfer, can be either intra- or intermolecular. RT uses the 3' end of this newly synthesized short ssDNA to perform the RNA-dependent minus-strand DNA synthesis of the whole template. RNase H digests the RNA template except for two polypurine tracts (PPTs) situated at the 5'-end and near the center of the genome. It is not clear if both polymerase and RNase H activities are simultaneous. RNase H probably can proceed both in a polymerase-dependent (RNA cut into small fragments by the same RT performing DNA synthesis) and a polymerase-independent mode (cleavage of remaining RNA fragments by free RTs). Secondly, RT performs DNA-directed plus-strand DNA synthesis using the PPTs that have not been removed by RNase H as primers. PPTs and tRNA primers are then removed by RNase H. The 3' and 5' ssDNA PBS regions hybridize to form a circular dsDNA intermediate. Strand displacement synthesis by RT to the PBS and PPT ends produces a blunt ended, linear dsDNA copy of the viral genome that includes long terminal repeats (LTRs) at both ends. Catalyzes viral DNA integration into the host chromosome, by performing a series of DNA cutting and joining reactions. This enzyme activity takes place after virion entry into a cell and reverse transcription of the RNA genome in dsDNA. The first step in the integration process is 3' processing. This step requires a complex comprising the viral genome, matrix protein, Vpr and integrase. This complex is called the pre-integration complex (PIC). The integrase protein removes 2 nucleotides from each 3' end of the viral DNA, leaving recessed CA OH's at the 3' ends. In the second step, the PIC enters cell nucleus. This process is mediated through integrase and Vpr proteins, and allows the virus to infect a non dividing cell. This ability to enter the nucleus is specific of lentiviruses, other retroviruses cannot and rely on cell division to access cell chromosomes. In the third step, termed strand transfer, the integrase protein joins the previously processed 3' ends to the 5' ends of strands of target cellular DNA at the site of integration. The 5'-ends are produced by integrase-catalyzed staggered cuts, 5 bp apart. A Y-shaped, gapped, recombination intermediate results, with the 5'-ends of the viral DNA strands and the 3' ends of target DNA strands remaining unjoined, flanking a gap of 5 bp. The last step is viral DNA integration into host chromosome. This involves host DNA repair synthesis in which the 5 bp gaps between the unjoined strands are filled in and then ligated. Since this process occurs at both cuts flanking the HIV genome, a 5 bp duplication of host DNA is produced at the ends of HIV-1 integration. Alternatively, Integrase may catalyze the excision of viral DNA just after strand transfer, this is termed disintegration. This chain is Gag-Pol polyprotein (gag-pol), found in Homo sapiens (Human).